The sequence spans 167 residues: Ribosome maturation factor RimM (167 aa).

The region spanning 94 to 166 (DDRAWLHELE…YIHVPRFDEF (73 aa)) is the PRC barrel domain.

It belongs to the RimM family. Binds ribosomal protein uS19.

The protein localises to the cytoplasm. Its function is as follows. An accessory protein needed during the final step in the assembly of 30S ribosomal subunit, possibly for assembly of the head region. Essential for efficient processing of 16S rRNA. May be needed both before and after RbfA during the maturation of 16S rRNA. It has affinity for free ribosomal 30S subunits but not for 70S ribosomes. The sequence is that of Ribosome maturation factor RimM from Chlorobium luteolum (strain DSM 273 / BCRC 81028 / 2530) (Pelodictyon luteolum).